Reading from the N-terminus, the 71-residue chain is SPbeta prophage-derived uncharacterized protein YorP (71 aa).

In Bacillus subtilis (strain 168), this protein is SPbeta prophage-derived uncharacterized protein YorP (yorP).